The following is a 552-amino-acid chain: Urocanate hydratase (552 aa).

Residues 49–50 (GG), Gln-127, 173–175 (GMG), Glu-193, Arg-198, 239–240 (NA), 260–264 (QTSAH), 270–271 (YI), and Tyr-319 each bind NAD(+). Residue Cys-407 is part of the active site. Gly-489 serves as a coordination point for NAD(+).

Belongs to the urocanase family. It depends on NAD(+) as a cofactor.

The protein localises to the cytoplasm. The catalysed reaction is 4-imidazolone-5-propanoate = trans-urocanate + H2O. The protein operates within amino-acid degradation; L-histidine degradation into L-glutamate; N-formimidoyl-L-glutamate from L-histidine: step 2/3. Catalyzes the conversion of urocanate to 4-imidazolone-5-propionate. The sequence is that of Urocanate hydratase from Geobacillus sp. (strain WCH70).